A 554-amino-acid chain; its full sequence is MVSAKKVPAIALSAGVSFALLRFLCLAVCLNESPGQNQKEEKLCTENFTRILDSLLDGYDNRLRPGFGGPVTEVKTDIYVTSFGPVSDVEMEYTMDVFFRQTWIDKRLKYDGPIEILRLNNMMVTKVWTPDTFFRNGKKSVSHNMTAPNKLFRIMRNGTILYTMRLTISAECPMRLVDFPMDGHACPLKFGSYAYPKSEMIYTWTKGPEKSVEVPKESSSLVQYDLIGQTVSSETIKSITGEYIVMTVYFHLRRKMGYFMIQTYIPCIMTVILSQVSFWINKESVPARTVFGITTVLTMTTLSISARHSLPKVSYATAMDWFIAVCFAFVFSALIEFAAVNYFTNIQMEKAKRKTSKPPQEVPAAPVQREKHPEAPLQNTNANLNMRKRTNALVHSESDVGNRTEVGNHSSKSSTVVQESSKGTPRSYLASSPNPFSRANAAETISAARALPSASPTSIRTGYMPRKASVGSASTRHVFGSRLQRIKTTVNTIGATGKLSATPPPSAPPPSGSGTSKIDKYARILFPVTFGAFNMVYWVVYLSKDTMEKSESLM.

Positions 1-35 (MVSAKKVPAIALSAGVSFALLRFLCLAVCLNESPG) are cleaved as a signal peptide. Over 36 to 259 (QNQKEEKLCT…FHLRRKMGYF (224 aa)) the chain is Extracellular. N-linked (GlcNAc...) asparagine glycosylation is present at asparagine 47. Residue arginine 100 participates in 4-aminobutanoate binding. 2 N-linked (GlcNAc...) asparagine glycosylation sites follow: asparagine 144 and asparagine 157. Threonine 163 contacts 4-aminobutanoate. A disulfide bond links cysteine 172 and cysteine 186. The chain crosses the membrane as a helical span at residues 260 to 280 (MIQTYIPCIMTVILSQVSFWI). Residues 281 to 284 (NKES) are Cytoplasmic-facing. The helical transmembrane segment at 285–305 (VPARTVFGITTVLTMTTLSIS) threads the bilayer. Residues 306–318 (ARHSLPKVSYATA) lie on the Extracellular side of the membrane. A helical membrane pass occupies residues 319-341 (MDWFIAVCFAFVFSALIEFAAVN). Over 342–517 (YFTNIQMEKA…PPPSGSGTSK (176 aa)) the chain is Cytoplasmic. Disordered regions lie at residues 350–381 (KAKR…QNTN), 397–435 (ESDV…SPNP), 452–471 (PSAS…ASVG), and 495–515 (ATGK…GSGT). Residues 410–422 (SSKSSTVVQESSK) show a composition bias toward low complexity. Residues 502 to 511 (TPPPSAPPPS) show a composition bias toward pro residues. A helical transmembrane segment spans residues 518 to 540 (IDKYARILFPVTFGAFNMVYWVV). Residues 541–554 (YLSKDTMEKSESLM) lie on the Extracellular side of the membrane.

Belongs to the ligand-gated ion channel (TC 1.A.9) family. Gamma-aminobutyric acid receptor (TC 1.A.9.5) subfamily. GABRA4 sub-subfamily. As to quaternary structure, heteropentamer, formed by a combination of alpha (GABRA1-6), beta (GABRB1-3), gamma (GABRG1-3), delta (GABRD), epsilon (GABRE), rho (GABRR1-3), pi (GABRP) and theta (GABRQ) chains, each subunit exhibiting distinct physiological and pharmacological properties. Expressed in the brain.

It localises to the cell membrane. The protein resides in the postsynaptic cell membrane. It catalyses the reaction chloride(in) = chloride(out). Potentiated by histamine. Alpha subunit of the heteropentameric ligand-gated chloride channel gated by gamma-aminobutyric acid (GABA), a major inhibitory neurotransmitter in the brain. GABA-gated chloride channels, also named GABA(A) receptors (GABAAR), consist of five subunits arranged around a central pore and contain GABA active binding site(s) located at the alpha and beta subunit interface(s). When activated by GABA, GABAARs selectively allow the flow of chloride anions across the cell membrane down their electrochemical gradient. GABAARs containing alpha-4 are predominantly extrasynaptic, contributing to tonic inhibition in dentate granule cells and thalamic relay neurons. Extrasynaptic alpha-4-containing GABAARs control levels of excitability and network activity. GABAAR containing alpha-4-beta-3-delta subunits can simultaneously bind GABA and histamine where histamine binds at the interface of two neighboring beta subunits, which may be involved in the regulation of sleep and wakefulness. This is Gamma-aminobutyric acid receptor subunit alpha-4 from Homo sapiens (Human).